Here is a 132-residue protein sequence, read N- to C-terminus: 3'-dehydrocarminate deglycosidase beta subunit (132 aa).

This sequence belongs to the C-glycoside deglycosidase beta subunit family. As to quaternary structure, heterodimer composed of an alpha subunit (CarB) and a beta subunit (CarC). Mg(2+) serves as cofactor.

It catalyses the reaction 3'-dehydrocarminate + H(+) = kermesate + 1,5-anhydro-D-erythro-hex-1-en-3-ulose. Activity is strongly reduced in the presence of chelating agents. In terms of biological role, carbon-carbon bond-cleaving enzyme which participates in a carminate degradation pathway. Cleaves the C-C bond in 3'-dehydrocarminate to form kermesate. Also shows weak activity with other C-glycosides, such as 3''-dehydropuerarin (3''-oxo-puerarin), 3''-dehydroisoorientin (3''-oxo-homoorientin) and 3'-dehydromangiferin (3'-oxo-mangiferin). The polypeptide is 3'-dehydrocarminate deglycosidase beta subunit (Microbacterium sp).